Here is a 56-residue protein sequence, read N- to C-terminus: Large ribosomal subunit protein bL32 (56 aa).

This sequence belongs to the bacterial ribosomal protein bL32 family.

This Bacillus cereus (strain ATCC 14579 / DSM 31 / CCUG 7414 / JCM 2152 / NBRC 15305 / NCIMB 9373 / NCTC 2599 / NRRL B-3711) protein is Large ribosomal subunit protein bL32.